Consider the following 256-residue polypeptide: uncharacterized protein (256 aa).

Positions 1-24 (MIKRVNKLVLGISFLFLIISIFAG) are cleaved as a signal peptide. A lipid anchor (N-palmitoyl cysteine) is attached at Cys-25. Cys-25 carries S-diacylglycerol cysteine lipidation.

This sequence belongs to the staphylococcal tandem lipoprotein family.

Its subcellular location is the cell membrane. This is an uncharacterized protein from Staphylococcus aureus (strain Mu50 / ATCC 700699).